A 68-amino-acid polypeptide reads, in one-letter code: Copper transport protein ATOX1 (68 aa).

The HMA domain occupies 1–63 (MPKHEFSVDM…TLGKTGKAVS (63 aa)). Cu cation-binding residues include Cys12 and Cys15. Residue Ser47 is modified to Phosphoserine. Residue Lys60 is modified to N6-acetyllysine.

The protein belongs to the ATX1 family. Homodimer. Interacts with ATP7B. Interacts with ATP7A. Interacts (via dimer form) with SLC31A1 (via C-terminal domain); this interaction improves ATOX1 stability and controls intracellular Cu(I) levels.

Binds and deliver cytosolic copper to the copper ATPase proteins. May be important in cellular antioxidant defense. The sequence is that of Copper transport protein ATOX1 from Bos taurus (Bovine).